The primary structure comprises 467 residues: Calcium-binding protein P (467 aa).

Pro residues-rich tracts occupy residues 1-10 and 45-62; these read MQNPQNPPPA and QYPP…PPYP. Residues 1-311 are disordered; the sequence is MQNPQNPPPA…GAYPGQPPMG (311 aa). Positions 45–49 match the XYPPX motif; sequence QYPPQ. The span at 63–74 shows a compositional bias: low complexity; sequence GTQQPGAPGAPG. Short sequence motifs (XYPPX) lie at residues 75-79, 83-87, 94-98, 104-108, 115-119, 125-129, 136-140, 146-150, 157-161, 165-169, 176-180, 187-191, 221-225, 238-242, 247-251, 256-260, and 275-279; these read QYPPQ, GYPPQ, AYPPQ, and GVPPQ. Composition is skewed to pro residues over residues 75-109 and 118-131; these read QYPP…PPQQ and PQQP…PQQP. The segment covering 132 to 145 has biased composition (low complexity); the sequence is GAPGQYPPQQGQPG. Low complexity-rich tracts occupy residues 153–193 and 215–246; these read GQPG…PQQG and AYPG…GQPG. The span at 253–311 shows a compositional bias: low complexity; sequence QPGAYPPQQQQVAYPGQQPPMGAYPPQQGAYPGQQGAYPGQQGAYPGQQGAYPGQPPMG. 2 EF-hand domains span residues 399-434 and 435-467; these read QKMM…LGYY and FSKG…WSMQ. 5 residues coordinate Ca(2+): aspartate 412, asparagine 414, serine 416, threonine 418, and glutamate 423.

This is Calcium-binding protein P (cbpP) from Dictyostelium discoideum (Social amoeba).